The following is a 346-amino-acid chain: Phosphate acyltransferase (346 aa).

The protein belongs to the PlsX family. As to quaternary structure, homodimer. Probably interacts with PlsY.

The protein resides in the cytoplasm. The catalysed reaction is a fatty acyl-[ACP] + phosphate = an acyl phosphate + holo-[ACP]. It functions in the pathway lipid metabolism; phospholipid metabolism. Its function is as follows. Catalyzes the reversible formation of acyl-phosphate (acyl-PO(4)) from acyl-[acyl-carrier-protein] (acyl-ACP). This enzyme utilizes acyl-ACP as fatty acyl donor, but not acyl-CoA. The protein is Phosphate acyltransferase of Crocosphaera subtropica (strain ATCC 51142 / BH68) (Cyanothece sp. (strain ATCC 51142)).